We begin with the raw amino-acid sequence, 303 residues long: Putative S-adenosyl-L-methionine-dependent methyltransferase ML2020 (303 aa).

S-adenosyl-L-methionine contacts are provided by residues D130 and 159-160 (DL).

This sequence belongs to the UPF0677 family.

Its function is as follows. Exhibits S-adenosyl-L-methionine-dependent methyltransferase activity. This Mycobacterium leprae (strain TN) protein is Putative S-adenosyl-L-methionine-dependent methyltransferase ML2020.